A 255-amino-acid chain; its full sequence is 1-(5-phosphoribosyl)-5-[(5-phosphoribosylamino)methylideneamino] imidazole-4-carboxamide isomerase (255 aa).

Aspartate 12 (proton acceptor) is an active-site residue. Residue aspartate 131 is the Proton donor of the active site.

The protein belongs to the HisA/HisF family.

It is found in the cytoplasm. It catalyses the reaction 1-(5-phospho-beta-D-ribosyl)-5-[(5-phospho-beta-D-ribosylamino)methylideneamino]imidazole-4-carboxamide = 5-[(5-phospho-1-deoxy-D-ribulos-1-ylimino)methylamino]-1-(5-phospho-beta-D-ribosyl)imidazole-4-carboxamide. Its pathway is amino-acid biosynthesis; L-histidine biosynthesis; L-histidine from 5-phospho-alpha-D-ribose 1-diphosphate: step 4/9. The sequence is that of 1-(5-phosphoribosyl)-5-[(5-phosphoribosylamino)methylideneamino] imidazole-4-carboxamide isomerase from Cutibacterium acnes (strain DSM 16379 / KPA171202) (Propionibacterium acnes).